The chain runs to 467 residues: L-seryl-tRNA(Sec) selenium transferase (467 aa).

An N6-(pyridoxal phosphate)lysine modification is found at Lys-298.

It belongs to the SelA family. Pyridoxal 5'-phosphate is required as a cofactor.

The protein resides in the cytoplasm. It catalyses the reaction L-seryl-tRNA(Sec) + selenophosphate + H(+) = L-selenocysteinyl-tRNA(Sec) + phosphate. Its pathway is aminoacyl-tRNA biosynthesis; selenocysteinyl-tRNA(Sec) biosynthesis; selenocysteinyl-tRNA(Sec) from L-seryl-tRNA(Sec) (bacterial route): step 1/1. Functionally, converts seryl-tRNA(Sec) to selenocysteinyl-tRNA(Sec) required for selenoprotein biosynthesis. In Alkaliphilus metalliredigens (strain QYMF), this protein is L-seryl-tRNA(Sec) selenium transferase.